The following is a 91-amino-acid chain: Small ribosomal subunit protein uS15 (91 aa).

This sequence belongs to the universal ribosomal protein uS15 family. As to quaternary structure, part of the 30S ribosomal subunit. Forms a bridge to the 50S subunit in the 70S ribosome, contacting the 23S rRNA.

Functionally, one of the primary rRNA binding proteins, it binds directly to 16S rRNA where it helps nucleate assembly of the platform of the 30S subunit by binding and bridging several RNA helices of the 16S rRNA. In terms of biological role, forms an intersubunit bridge (bridge B4) with the 23S rRNA of the 50S subunit in the ribosome. In Rickettsia prowazekii (strain Madrid E), this protein is Small ribosomal subunit protein uS15.